The following is a 338-amino-acid chain: Ornithine carbamoyltransferase (338 aa).

Residues Arg116 and 143–146 (HPCQ) each bind carbamoyl phosphate. L-ornithine contacts are provided by residues Asn174, Asp235, and 239–240 (SM). 2 residues coordinate carbamoyl phosphate: Cys275 and Arg303.

The protein belongs to the aspartate/ornithine carbamoyltransferase superfamily. OTCase family.

It localises to the cytoplasm. The enzyme catalyses carbamoyl phosphate + L-ornithine = L-citrulline + phosphate + H(+). The protein operates within amino-acid biosynthesis; L-arginine biosynthesis; L-arginine from L-ornithine and carbamoyl phosphate: step 1/3. Its function is as follows. Reversibly catalyzes the transfer of the carbamoyl group from carbamoyl phosphate (CP) to the N(epsilon) atom of ornithine (ORN) to produce L-citrulline. The sequence is that of Ornithine carbamoyltransferase from Chlorobaculum tepidum (strain ATCC 49652 / DSM 12025 / NBRC 103806 / TLS) (Chlorobium tepidum).